We begin with the raw amino-acid sequence, 657 residues long: Probable potassium transport system protein Kup (657 aa).

Transmembrane regions (helical) follow at residues 14–34 (IGGLLITLGIIYGDIGTSPLY), 47–67 (ADIVLGGISCVFWTLTLQTTI), 96–116 (IQWLIVPAIIGGSALLADGII), 140–160 (TIVYIVITILFILFTIQQFGT), 166–186 (FFAPMMLIWFAMLGTLGFIQI), 201–221 (AYHLLSVHPDGFFVLGFVFLC), 242–262 (ISWIFVKTTLVLNYFGQAAYL), 283–303 (LIMPHWFLPFGIVVATLAAVI), 340–360 (LYIPSINWLLFFGCVGIVLHF), 371–391 (GLAIILCMIMTTILLNYYLIM), 396–416 (LYFMVPLITIYLLIEFSFLIA), and 425–445 (GYVTLIIAILLISIMTIWYLA).

The protein belongs to the HAK/KUP transporter (TC 2.A.72) family.

Its subcellular location is the cell inner membrane. The enzyme catalyses K(+)(in) + H(+)(in) = K(+)(out) + H(+)(out). Functionally, transport of potassium into the cell. Likely operates as a K(+):H(+) symporter. In Flavobacterium johnsoniae (strain ATCC 17061 / DSM 2064 / JCM 8514 / BCRC 14874 / CCUG 350202 / NBRC 14942 / NCIMB 11054 / UW101) (Cytophaga johnsonae), this protein is Probable potassium transport system protein Kup.